A 301-amino-acid chain; its full sequence is Putative glycosyltransferase MJ1113 (301 aa).

The next 8 membrane-spanning stretches (helical) occupy residues 2–22, 62–82, 95–115, 117–137, 140–160, 164–184, 191–211, and 280–300; these read GHYFINLFTYTIIAFIFSAVL, FIPFVNPIFVLPIITAGIIGI, LILLFISGLIIGILFYNNSYV, LIEILIIALGIMISSNLTNML, FNGLEIGMGVIASISLALVLF, YTTGFLSALIFSASYLGLLIF, VFPGDVGTLPIGAFLAVLAVV, and VTVLWIIGIFFGIVGILISLI.

It belongs to the glycosyltransferase 4 family.

It is found in the cell membrane. The polypeptide is Putative glycosyltransferase MJ1113 (Methanocaldococcus jannaschii (strain ATCC 43067 / DSM 2661 / JAL-1 / JCM 10045 / NBRC 100440) (Methanococcus jannaschii)).